The primary structure comprises 269 residues: Hydroxyethylthiazole kinase (269 aa).

Met46 provides a ligand contact to substrate. ATP is bound by residues Arg122 and Thr168. Gly195 serves as a coordination point for substrate.

This sequence belongs to the Thz kinase family. Mg(2+) is required as a cofactor.

The catalysed reaction is 5-(2-hydroxyethyl)-4-methylthiazole + ATP = 4-methyl-5-(2-phosphooxyethyl)-thiazole + ADP + H(+). It participates in cofactor biosynthesis; thiamine diphosphate biosynthesis; 4-methyl-5-(2-phosphoethyl)-thiazole from 5-(2-hydroxyethyl)-4-methylthiazole: step 1/1. In terms of biological role, catalyzes the phosphorylation of the hydroxyl group of 4-methyl-5-beta-hydroxyethylthiazole (THZ). In Geobacillus kaustophilus (strain HTA426), this protein is Hydroxyethylthiazole kinase.